A 262-amino-acid polypeptide reads, in one-letter code: Acyl-[acyl-carrier-protein]--UDP-N-acetylglucosamine O-acyltransferase (262 aa).

It belongs to the transferase hexapeptide repeat family. LpxA subfamily. Homotrimer.

It is found in the cytoplasm. The catalysed reaction is a (3R)-hydroxyacyl-[ACP] + UDP-N-acetyl-alpha-D-glucosamine = a UDP-3-O-[(3R)-3-hydroxyacyl]-N-acetyl-alpha-D-glucosamine + holo-[ACP]. The protein operates within glycolipid biosynthesis; lipid IV(A) biosynthesis; lipid IV(A) from (3R)-3-hydroxytetradecanoyl-[acyl-carrier-protein] and UDP-N-acetyl-alpha-D-glucosamine: step 1/6. Involved in the biosynthesis of lipid A, a phosphorylated glycolipid that anchors the lipopolysaccharide to the outer membrane of the cell. The sequence is that of Acyl-[acyl-carrier-protein]--UDP-N-acetylglucosamine O-acyltransferase from Burkholderia multivorans (strain ATCC 17616 / 249).